We begin with the raw amino-acid sequence, 452 residues long: 1-aminocyclopropane-1-carboxylate synthase 3 (452 aa).

Lys283 bears the N6-(pyridoxal phosphate)lysine mark.

Belongs to the class-I pyridoxal-phosphate-dependent aminotransferase family. Requires pyridoxal 5'-phosphate as cofactor. Expressed in leaves. Expressed in roots and leaf blades. Expressed at low levels in leaf sheaths and shoot bases.

The enzyme catalyses S-adenosyl-L-methionine = 1-aminocyclopropane-1-carboxylate + S-methyl-5'-thioadenosine + H(+). It participates in alkene biosynthesis; ethylene biosynthesis via S-adenosyl-L-methionine; ethylene from S-adenosyl-L-methionine: step 1/2. Its function is as follows. Catalyzes the formation of 1-aminocyclopropane-1-carboxylate, a direct precursor of ethylene in higher plants. In Oryza sativa subsp. japonica (Rice), this protein is 1-aminocyclopropane-1-carboxylate synthase 3.